Consider the following 404-residue polypeptide: SAC3 domain-containing protein 1 (404 aa).

Disordered stretches follow at residues 1 to 58 and 77 to 117; these read MAGR…GTCP and RLEV…QLRP. Positions 12–21 are enriched in pro residues; that stretch reads PPRPAAPHPR. Residues 87–101 are compositionally biased toward basic and acidic residues; the sequence is DPPRADPQRAVKEYS. The 177-residue stretch at 203–379 folds into the PCI domain; the sequence is QVQEGFGSLR…TCKVLVESKL (177 aa). Phosphoserine is present on serine 402.

Belongs to the SAC3 family. May be part of a SEM1-containing complex.

It is found in the cytoplasm. The protein localises to the cytoskeleton. It localises to the microtubule organizing center. Its subcellular location is the centrosome. The protein resides in the spindle. Its function is as follows. Involved in centrosome duplication and mitotic progression. The sequence is that of SAC3 domain-containing protein 1 (SAC3D1) from Homo sapiens (Human).